Consider the following 254-residue polypeptide: Pyridoxine 5'-phosphate synthase (254 aa).

Residue asparagine 12 participates in 3-amino-2-oxopropyl phosphate binding. Residue 14-15 (DH) participates in 1-deoxy-D-xylulose 5-phosphate binding. Residue arginine 23 participates in 3-amino-2-oxopropyl phosphate binding. Residue histidine 48 is the Proton acceptor of the active site. 1-deoxy-D-xylulose 5-phosphate is bound by residues arginine 50 and histidine 55. Glutamate 75 (proton acceptor) is an active-site residue. Threonine 105 lines the 1-deoxy-D-xylulose 5-phosphate pocket. The Proton donor role is filled by histidine 199. Residues glycine 200 and 221-222 (GF) contribute to the 3-amino-2-oxopropyl phosphate site.

Belongs to the PNP synthase family. In terms of assembly, homooctamer; tetramer of dimers.

It localises to the cytoplasm. The catalysed reaction is 3-amino-2-oxopropyl phosphate + 1-deoxy-D-xylulose 5-phosphate = pyridoxine 5'-phosphate + phosphate + 2 H2O + H(+). Its pathway is cofactor biosynthesis; pyridoxine 5'-phosphate biosynthesis; pyridoxine 5'-phosphate from D-erythrose 4-phosphate: step 5/5. Catalyzes the complicated ring closure reaction between the two acyclic compounds 1-deoxy-D-xylulose-5-phosphate (DXP) and 3-amino-2-oxopropyl phosphate (1-amino-acetone-3-phosphate or AAP) to form pyridoxine 5'-phosphate (PNP) and inorganic phosphate. The polypeptide is Pyridoxine 5'-phosphate synthase (Rhodopseudomonas palustris (strain TIE-1)).